We begin with the raw amino-acid sequence, 123 residues long: Small ribosomal subunit protein uS12 (123 aa).

Positions 1–32 (MPTIQQLVRKGRTDKISKNKTPALKGSPQRRG) are disordered. Position 89 is a 3-methylthioaspartic acid (aspartate 89). Residues 103-123 (DTQGVKGRKQARSRYGAKKEK) are disordered. A compositionally biased stretch (basic residues) spans 108 to 123 (KGRKQARSRYGAKKEK).

Belongs to the universal ribosomal protein uS12 family. As to quaternary structure, part of the 30S ribosomal subunit. Contacts proteins S8 and S17. May interact with IF1 in the 30S initiation complex.

Its function is as follows. With S4 and S5 plays an important role in translational accuracy. Functionally, interacts with and stabilizes bases of the 16S rRNA that are involved in tRNA selection in the A site and with the mRNA backbone. Located at the interface of the 30S and 50S subunits, it traverses the body of the 30S subunit contacting proteins on the other side and probably holding the rRNA structure together. The combined cluster of proteins S8, S12 and S17 appears to hold together the shoulder and platform of the 30S subunit. The polypeptide is Small ribosomal subunit protein uS12 (Cutibacterium acnes (strain DSM 16379 / KPA171202) (Propionibacterium acnes)).